The primary structure comprises 90 residues: U7-theraphotoxin-Hhn1k (90 aa).

A signal peptide spans 1 to 19 (MKTAIFTVVLALAVFAVLS). Positions 20–50 (FGWEANEKALSEEFTELIHEKEAASETEARE) are excised as a propeptide. Disulfide bonds link Cys-51/Cys-65 and Cys-58/Cys-70.

Belongs to the neurotoxin 10 (Hwtx-1) family. 13 (Hntx-13) subfamily. As to expression, expressed by the venom gland.

Its subcellular location is the secreted. In terms of biological role, ion channel inhibitor. In Cyriopagopus hainanus (Chinese bird spider), this protein is U7-theraphotoxin-Hhn1k.